We begin with the raw amino-acid sequence, 686 residues long: Translation initiation factor IF-2 (686 aa).

A disordered region spans residues 53 to 105 (EKPSVADEFEVEEKVVRSKKNSNKKKKKGKGNEDKRQENFAGRQQTQTVETPD). Residues 69-81 (RSKKNSNKKKKKG) are compositionally biased toward basic residues. A tr-type G domain is found at 188-357 (ERPAVVTIMG…LLVSEVEEYK (170 aa)). Residues 197–204 (GHVDHGKT) are G1. Position 197 to 204 (197 to 204 (GHVDHGKT)) interacts with GTP. The G2 stretch occupies residues 222 to 226 (GITQH). The tract at residues 243–246 (DTPG) is G3. GTP-binding positions include 243–247 (DTPGH) and 297–300 (NKMD). The G4 stretch occupies residues 297–300 (NKMD). A G5 region spans residues 333-335 (SAI).

Belongs to the TRAFAC class translation factor GTPase superfamily. Classic translation factor GTPase family. IF-2 subfamily.

The protein resides in the cytoplasm. One of the essential components for the initiation of protein synthesis. Protects formylmethionyl-tRNA from spontaneous hydrolysis and promotes its binding to the 30S ribosomal subunits. Also involved in the hydrolysis of GTP during the formation of the 70S ribosomal complex. The protein is Translation initiation factor IF-2 of Bacillus cereus (strain ATCC 10987 / NRS 248).